We begin with the raw amino-acid sequence, 152 residues long: Small ribosomal subunit protein bS6 (152 aa).

The disordered stretch occupies residues 96–152 (HEEGPSAMLQKRDRDDRGERGDRGDRGDRGDRGFGGREDRPRRPRPTEESHGGEEEV).

It belongs to the bacterial ribosomal protein bS6 family.

Binds together with bS18 to 16S ribosomal RNA. This is Small ribosomal subunit protein bS6 from Xanthobacter autotrophicus (strain ATCC BAA-1158 / Py2).